Reading from the N-terminus, the 244-residue chain is Phosphoadenosine 5'-phosphosulfate reductase (244 aa).

Cysteine 239 functions as the Nucleophile; cysteine thiosulfonate intermediate in the catalytic mechanism.

It belongs to the PAPS reductase family. CysH subfamily.

It localises to the cytoplasm. It carries out the reaction [thioredoxin]-disulfide + sulfite + adenosine 3',5'-bisphosphate + 2 H(+) = [thioredoxin]-dithiol + 3'-phosphoadenylyl sulfate. The protein operates within sulfur metabolism; hydrogen sulfide biosynthesis; sulfite from sulfate: step 3/3. Catalyzes the formation of sulfite from phosphoadenosine 5'-phosphosulfate (PAPS) using thioredoxin as an electron donor. This chain is Phosphoadenosine 5'-phosphosulfate reductase, found in Yersinia pseudotuberculosis serotype O:1b (strain IP 31758).